Consider the following 44-residue polypeptide: Conotoxin Sr5.5 (44 aa).

An N-terminal signal peptide occupies residues 1 to 19 (MRCLPVFVILLLLIASAPS). Residues 20–29 (VDDNAKGTQH) constitute a propeptide that is removed on maturation.

This sequence belongs to the conotoxin T superfamily. Contains 2 disulfide bonds that can be either 'C1-C3, C2-C4' or 'C1-C4, C2-C3', since these disulfide connectivities have been observed for conotoxins with cysteine framework V (for examples, see AC P0DQQ7 and AC P81755). As to expression, expressed by the venom duct.

The protein resides in the secreted. The polypeptide is Conotoxin Sr5.5 (Conus spurius (Alphabet cone)).